The following is a 431-amino-acid chain: Enolase (431 aa).

Gln167 is a (2R)-2-phosphoglycerate binding site. Glu209 functions as the Proton donor in the catalytic mechanism. 3 residues coordinate Mg(2+): Asp246, Glu289, and Asp316. Positions 341, 370, 371, and 392 each coordinate (2R)-2-phosphoglycerate. Lys341 serves as the catalytic Proton acceptor.

It belongs to the enolase family. As to quaternary structure, component of the RNA degradosome, a multiprotein complex involved in RNA processing and mRNA degradation. Mg(2+) serves as cofactor.

The protein resides in the cytoplasm. It localises to the secreted. Its subcellular location is the cell surface. It catalyses the reaction (2R)-2-phosphoglycerate = phosphoenolpyruvate + H2O. It participates in carbohydrate degradation; glycolysis; pyruvate from D-glyceraldehyde 3-phosphate: step 4/5. Catalyzes the reversible conversion of 2-phosphoglycerate (2-PG) into phosphoenolpyruvate (PEP). It is essential for the degradation of carbohydrates via glycolysis. The sequence is that of Enolase from Shewanella sp. (strain MR-4).